We begin with the raw amino-acid sequence, 119 residues long: Protein TusC (119 aa).

The protein belongs to the DsrF/TusC family. Heterohexamer, formed by a dimer of trimers. The hexameric TusBCD complex contains 2 copies each of TusB, TusC and TusD. The TusBCD complex interacts with TusE.

Its subcellular location is the cytoplasm. Part of a sulfur-relay system required for 2-thiolation of 5-methylaminomethyl-2-thiouridine (mnm(5)s(2)U) at tRNA wobble positions. This Escherichia coli O8 (strain IAI1) protein is Protein TusC.